Consider the following 256-residue polypeptide: Capsid protein (256 aa).

Residues 3-20 (KRPADIVISTPASKVRRK) carry the Bipartite nuclear localization signal motif. The Nuclear localization signal motif lies at 40–54 (RRRTWVNRPMYRKPM). A zinc finger spans residues 68 to 85 (CEGPCKVQSYEQRHDVAH). Residues 101–122 (ITHRTGKRFCIKSIYVLGKIWM) carry the Nuclear export signal motif. Positions 200 to 247 (NRFYKIYNHCTYNHQEAAKYENHTENALLLYMACTHASNPVYATLKIR) match the Bipartite nuclear localization signal motif.

It belongs to the geminiviridae capsid protein family. Homomultimer. Binds to single-stranded and double-stranded viral DNA. Interacts (via nuclear localization signals) with host importin alpha-1a.

The protein resides in the virion. It is found in the host nucleus. Encapsidates the viral genome into characteristic twinned ('geminate') particles. Binds the genomic viral ssDNA and shuttles it into and out of the cell nucleus. Plays a role in protection of the genome from degradation, virus acquisition and transmission by insect vectors, infectivity, and systemic movement. The CP of monopartite geminiviruses is absolutely essential for virus movement. In Tomato leaf curl virus (strain Australia) (ToLCV), this protein is Capsid protein.